We begin with the raw amino-acid sequence, 114 residues long: Phycoerythrin alpha-1 subunit (114 aa).

Residues aspartate 52, serine 53, glutamate 63, arginine 64, cysteine 67, threonine 72, lysine 74, alanine 75, and lysine 84 each contribute to the (2R,3E)-phycoerythrobilin site.

It belongs to the phycoerythrin family. As to quaternary structure, heterotetramer of 2 different alpha chains and 2 identical beta chains which form 2 alpha-beta heterodimers within the heterotetramer. The two alpha-beta heterodimers are rotated to an open configuration in contrast to the closed configuration found in other cryptophyte species due to the insertion of a single amino acid, Asp-65, in a conserved region of the alpha chain. In the open form, the central chromophores are not in physical contact but are separated by a water-filled channel. In terms of processing, contains three phycoerythrobilin chromophores with binding mediated by both the alpha and beta subunits.

It localises to the plastid. The protein resides in the chloroplast thylakoid membrane. In terms of biological role, light-harvesting photosynthetic tetrapyrrole chromophore-protein from the phycobiliprotein complex. The polypeptide is Phycoerythrin alpha-1 subunit (Hemiselmis andersenii (Cryptophyte alga)).